The following is a 644-amino-acid chain: Acetyl-coenzyme A synthetase 2 (644 aa).

CoA-binding positions include 189–192 (RGGK), Thr-307, and Asn-331. ATP-binding positions include 383-385 (GEP), 407-412 (DTWWQT), Asp-496, and Arg-511. A CoA-binding site is contributed by Ser-519. Arg-522 is a binding site for ATP. 3 residues coordinate Mg(2+): Val-533, His-535, and Val-538. An N6-acetyllysine modification is found at Lys-605.

It belongs to the ATP-dependent AMP-binding enzyme family. The cofactor is Mg(2+). Acetylated. Deacetylation by the SIR2-homolog deacetylase activates the enzyme.

It catalyses the reaction acetate + ATP + CoA = acetyl-CoA + AMP + diphosphate. Catalyzes the conversion of acetate into acetyl-CoA (AcCoA), an essential intermediate at the junction of anabolic and catabolic pathways. AcsA undergoes a two-step reaction. In the first half reaction, AcsA combines acetate with ATP to form acetyl-adenylate (AcAMP) intermediate. In the second half reaction, it can then transfer the acetyl group from AcAMP to the sulfhydryl group of CoA, forming the product AcCoA. The chain is Acetyl-coenzyme A synthetase 2 from Pseudomonas putida (strain ATCC 47054 / DSM 6125 / CFBP 8728 / NCIMB 11950 / KT2440).